We begin with the raw amino-acid sequence, 459 residues long: Serine permease SerP1 (459 aa).

12 consecutive transmembrane segments (helical) span residues 19-39 (IQLI…AGKT), 42-62 (MTGP…FFFL), 97-117 (SYWL…GTYI), 119-139 (FWLP…LLFG), 153-173 (FWFA…AIIL), 212-232 (FVGA…IGMT), 254-274 (ILLF…WHYI), 281-301 (FVIV…NFVV), 341-361 (AGIP…APVL), 370-390 (AFNF…FITL), 412-432 (PTIA…SLFF), and 436-456 (TFYP…YSHF).

It belongs to the amino acid-polyamine-organocation (APC) superfamily. Amino acid transporter (AAT) (TC 2.A.3.1) family.

Its subcellular location is the cell membrane. Transports L-serine, L-threonine and L-cysteine with high affinity. Stereoselective, with a strong preference for L-serine. Is the main L-serine transporter and is responsible for optimal growth in media containing free amino acids as the sole source of amino acids. Is also the main transporter for L-threonine. This is Serine permease SerP1 from Lactococcus lactis subsp. cremoris (strain MG1363).